The chain runs to 129 residues: MRHRQSNRKLNRTTSHRLAMFRNMTNSLLKHEVIKTTLPKAKDLRRFVEPLITLGKESTVANQRLAFDRLRDREMVVKLFGELGPRYQARPGGYLRILKYGFRKGDNAPMALVELVDRPESDAAPVDAE.

The protein belongs to the bacterial ribosomal protein bL17 family. As to quaternary structure, part of the 50S ribosomal subunit. Contacts protein L32.

This chain is Large ribosomal subunit protein bL17, found in Thiobacillus denitrificans (strain ATCC 25259 / T1).